Here is a 63-residue protein sequence, read N- to C-terminus: Hirudin-P6 (63 aa).

Residues 1-3 are interaction with thrombin active site; sequence MRY. 3 disulfide bridges follow: cysteine 6-cysteine 14, cysteine 16-cysteine 28, and cysteine 22-cysteine 37. The span at 35 to 55 shows a compositional bias: basic and acidic residues; sequence KKCVEGEGTRKPQNEGQHDFD. A disordered region spans residues 35 to 63; sequence KKCVEGEGTRKPQNEGQHDFDPIPEEYLS. A glycan (O-linked (GalNAc...) threonine) is linked at threonine 43. Residues 53–63 are interaction with fibrinogen-binding exosite of thrombin; sequence DFDPIPEEYLS. Tyrosine 61 is modified (sulfotyrosine).

It belongs to the protease inhibitor I14 (hirudin) family. O-linked glycan consists of Fuc-Gal-GalNAc trisaccharide.

The protein localises to the secreted. Its function is as follows. Hirudin is a potent thrombin-specific protease inhibitor. It forms a stable non-covalent complex with alpha-thrombin, thereby abolishing its ability to cleave fibrinogen. The chain is Hirudin-P6 from Hirudinaria manillensis (Asian medical leech).